Here is a 725-residue protein sequence, read N- to C-terminus: MVMKAAVDDDASGWELNVPEKMEKSSTSWVDITQDFEDACRELKLGELLHDKLFGLFEAMSAIEMMDPKMDAGMIGNQVNRKVLNFEQAVKDGTIKIKDLSLPELIGIMDTCFCCLITWLEGHSLAQTVFTCLYIHNPDFIEDPAMKAFALGILKICDIAREKVNKAAVFEEEDFQSMTYGFKMANGVTDLRVTGMLKDVEDDMQRRVKSTRSRQGEERDPEVELEHQQCLAAFSRVKFTRVLLTVLIAFTKKETSAVAEAQKLMVQAADLLSAIHTSLHHGIQAQNGTTKGDHPIMMGFEPLVNQRLLPPTFPRYAKIIKREEMVNYFSRLIDRIKTVCEVVNLPNLHCILDFFCEFSEQSPCVLSRSLLQTTFLVDNKKVFGTHLMQDMVKDALRSFVSPPVLSPKCCLYNNHQAKDCIDSFVTHCVRPFCSLVQIHGHNRARQRDKLGHILEEFATLQDEAEKVDAALHTMLLKQEPQRQHLACLGTWVLYHSLRIMIQYLLSGFELELYSMHEYYYIYWYLSEFLYAWLMSTLSRADGSQMAEERIMEEQQKGRSSKKTKKKKKVRPLSREITMSQAYQNMCAGMFKTMVAFDMDGKVRKPKFELDSEQVRYEHRFAPFNSVMTPPPVHYLQFKEMSDLSKYSPPPQPPELYVAASKHFQQAKMILESIPNADREVSRILKVAKPNFVVMKLLAGGHKKESKVPPEFDFSVHKYFPVVKLV.

The tract at residues 548-573 is disordered; it reads ERIMEEQQKGRSSKKTKKKKKVRPLS. Basic residues predominate over residues 558 to 571; that stretch reads RSSKKTKKKKKVRP.

The protein belongs to the MAK10 family. Component of the N-terminal acetyltransferase C (NatC) complex, which is composed of NAA35, NAA38 and NAA30. As to expression, expressed in primary spermatocytes, basal epidermis, interstitial fibroblasts of skeletal muscle, and intestinal crypts.

It localises to the cytoplasm. In terms of biological role, auxillary component of the N-terminal acetyltransferase C (NatC) complex which catalyzes acetylation of N-terminal methionine residues. N-terminal acetylation protects proteins from ubiquitination and degradation by the N-end rule pathway. Involved in regulation of apoptosis and proliferation of smooth muscle cells. This Rattus norvegicus (Rat) protein is N-alpha-acetyltransferase 35, NatC auxiliary subunit (Naa35).